The chain runs to 33 residues: Alpha-amanitin proprotein (33 aa).

A propeptide spanning residues 1–10 is cleaved from the precursor; the sequence is MSDINATRLP. Ile11 is modified ((3R,4R)-4,5-dihydroxyisoleucine; in form alpha-amanitin). At Ile11 the chain carries (3R,4S)-4-hydroxyisoleucine; in form gamma-amanitin. A cross-link (cyclopeptide (Ile-Pro)) is located at residues 11–18; the sequence is IWGIGCNP. The segment at residues 12 to 16 is a cross-link (2'-cysteinyl-6'-hydroxytryptophan sulfoxide (Trp-Cys)); it reads WGIGC. At Pro18 the chain carries 4-hydroxyproline. Residues 19–33 constitute a propeptide that is removed on maturation; the sequence is CVGDEVTALLTRGEA.

This sequence belongs to the MSDIN fungal toxin family. Post-translationally, processed by the macrocyclase-peptidase enzyme POPB to yield a toxic cyclic decapeptide. POPB first removes 10 residues from the N-terminus. Conformational trapping of the remaining peptide forces the enzyme to release this intermediate rather than proceed to macrocyclization. The enzyme rebinds the remaining peptide in a different conformation and catalyzes macrocyclization of the N-terminal 8 residues.

Major toxin belonging to the bicyclic octapeptides amatoxins that acts by binding non-competitively to RNA polymerase II and greatly slowing the elongation of transcripts from target promoters. This chain is Alpha-amanitin proprotein, found in Amanita fuligineoides.